A 749-amino-acid chain; its full sequence is MAGLGRLDPGPRTVMPAWKREILERRRAKLAALSGGQGSGAAPDGPNERLVLAESLGPLSQNPFMRLESERRRGTRPAQQLLELYCRVPGVRTIRADNILIIESAPGFPPAVPPAAGIRAAEVVVYEAPQPGRVSRLLEKFDSPAAPCRRGSPERFRPALPQLPVASASAATRTPTNRSLAPASPVRLSQPAPPISPVPVAQRAGQRSACCEPAHPDGTAGPGARRSDFLQKTGSNSFTVHPRGLPRSAVNRSLSNGPMTQESPTGPANGLSGSPPVPGKWKPKVESKEPSLHPPPSPGTPSATSVGPPAFPAPSPASATPSQRQWVSSATSANDSFEIRPSSKPDMETIPIGDLQARALANLRVNSRNSFVLIPKRKAPGNYPLAGRQFEEPKGEVGWASQSQGLGSQLVSTVDGAPALEKSPLAAEMQWAVRKGACPRPAISDTDKCVRWQRPASPPPFLPATAEAEPAEGLGVPGLAKNGQEPVRPGLPVTFIDEVDSEEEAFQEAKLPSSAVGVPSQYHLHPARPGHTSELLNRGSNTFTVVPKRKPGTLQEPHLSQTNGQSQQGAEEQDAESLSGPHTTLENTLKKRYPTVHEIEVIGGYLALQKSCLIKAGSSRKKMKISFNDKSLHTTFEYPSESSLAQEEAEEEEEEEGEEDGEEEEVGPDSEKPFTVFLPRATFVSSVGPESSSGLSSYTPKHSMAFSKWQEQTLVQTPTDVELPPKEVMLTPASQNDLSDFRSEPALYF.

The tract at residues 144 to 348 (PAAPCRRGSP…IRPSSKPDME (205 aa)) is disordered. Composition is skewed to polar residues over residues 169-179 (SAATRTPTNRS), 230-239 (LQKTGSNSFT), and 250-266 (VNRS…SPTG). Ser274 carries the post-translational modification Phosphoserine. Polar residues predominate over residues 323 to 335 (QRQWVSSATSAND). Over residues 337–347 (FEIRPSSKPDM) the composition is skewed to basic and acidic residues. A phosphoserine mark is found at Ser401, Ser457, and Ser501. Disordered stretches follow at residues 502–586 (EEEA…TTLE), 636–673 (FEYP…SEKP), and 730–749 (LTPA…ALYF). Polar residues-rich tracts occupy residues 534-544 (ELLNRGSNTFT) and 558-570 (HLSQ…QQGA). Residues 647–668 (EEAEEEEEEEGEEDGEEEEVGP) show a composition bias toward acidic residues.

It belongs to the taperin family. As to quaternary structure, interacts with GRXCR2; the interaction restricts TPRN to the stereocilum basal region. Interacts with actin ACTB; the interaction may stabilize stereocilia. Interacts with CLIC5. Interacts with PTPRQ. TPRN, CLIC5 and PTPQR form concentric rings at the base of stereocilia and may form a complex. Interacts with phosphatase PPP1CA; the interaction results in inhibition of PPP1CA phosphatase activity. Interacts with DNA damage response proteins XRCC6/KU70, XRCC5/KU80, PARP1, TOP1 and TOP2A; these interactions recruit TPRN to sites of DNA damage where it may play a role in DNA repair. In terms of tissue distribution, in the organ of Corti, expressed in the inner ear hair cell stereocilia and the supporting cells (at protein level). Expressed in the sensory epithelia of the organ of Corti and vestibular end organs and, to a lesser extent, in Reisner's membrane and the spiral ligament (at protein level). At postnatal day 2, expression is detected in cochlea, liver, brain, kidney, heart and lung.

It localises to the cell projection. The protein localises to the stereocilium. The protein resides in the microvillus. It is found in the nucleus. Its subcellular location is the nucleoplasm. It localises to the cytoplasm. In terms of biological role, essential for hearing. Required for maintenance of stereocilia on both inner and outer hair cells. Necessary for the integrity of the stereociliary rootlet. May act as an actin cytoskeleton regulator involved in the regulation of actin dynamics at the pointed end in hair cells. Forms rings at the base of stereocilia and binds actin filaments in the stereocilia which may stabilize the stereocilia. Acts as a strong inhibitor of PPP1CA phosphatase activity. Recruited to sites of DNA damage and may play a role in DNA damage repair. This chain is Taperin (Tprn), found in Mus musculus (Mouse).